Here is a 596-residue protein sequence, read N- to C-terminus: Ferredoxin--nitrite reductase, chloroplastic (596 aa).

The transit peptide at 1-28 (MASSASLQRFLPPYPHAAASRCRPPGVR) directs the protein to the chloroplast. A disordered region spans residues 1–56 (MASSASLQRFLPPYPHAAASRCRPPGVRARPVQSSTVSAPSSSTPAADEAVSAERL). Positions 31 to 47 (PVQSSTVSAPSSSTPAA) are enriched in low complexity. Positions 474, 480, 515, and 519 each coordinate [4Fe-4S] cluster. Cys519 provides a ligand contact to siroheme.

It belongs to the nitrite and sulfite reductase 4Fe-4S domain family. In terms of assembly, monomer. It depends on siroheme as a cofactor. [4Fe-4S] cluster serves as cofactor.

It is found in the plastid. Its subcellular location is the chloroplast. It carries out the reaction 6 oxidized [2Fe-2S]-[ferredoxin] + NH4(+) + 2 H2O = nitrite + 6 reduced [2Fe-2S]-[ferredoxin] + 8 H(+). It participates in nitrogen metabolism; nitrate reduction (assimilation). Functionally, catalyzes the six-electron reduction of nitrite to ammonium. This chain is Ferredoxin--nitrite reductase, chloroplastic, found in Oryza sativa subsp. japonica (Rice).